Reading from the N-terminus, the 461-residue chain is Acetylornithine aminotransferase, mitochondrial (461 aa).

The interval 36-56 (YATASQLTHPDPTEDSPSGKM) is disordered. The residue at position 312 (K312) is an N6-(pyridoxal phosphate)lysine.

The protein belongs to the class-III pyridoxal-phosphate-dependent aminotransferase family. The cofactor is pyridoxal 5'-phosphate.

It is found in the mitochondrion matrix. The enzyme catalyses N(2)-acetyl-L-ornithine + 2-oxoglutarate = N-acetyl-L-glutamate 5-semialdehyde + L-glutamate. Its pathway is amino-acid biosynthesis; L-arginine biosynthesis; N(2)-acetyl-L-ornithine from L-glutamate: step 4/4. The sequence is that of Acetylornithine aminotransferase, mitochondrial (arg-8) from Neurospora crassa (strain ATCC 24698 / 74-OR23-1A / CBS 708.71 / DSM 1257 / FGSC 987).